A 286-amino-acid polypeptide reads, in one-letter code: Protein WVD2-like 1 (286 aa).

A disordered region spans residues 31 to 101; that stretch reads ETDEEFEVKE…ENKKHIDDED (71 aa). Phosphothreonine is present on Thr-32. The segment covering 38-47 has biased composition (basic and acidic residues); that stretch reads VKECTEEKSL. A coiled-coil region spans residues 131–182; sequence AQRAEKRKEYYQKLEEKNQALEAERNELEQRQKDEQEAALKQLRKNLKFKAK. The disordered stretch occupies residues 186-286; the sequence is NFYYEAPPAK…KPVNESSEEA (101 aa). Polar residues predominate over residues 234–247; it reads TVSNRNRHSTGTVQ.

It belongs to the TPX2 family.

Its subcellular location is the cytoplasm. It is found in the cytoskeleton. Microtubule-associated protein (MAP) that regulates the orientation of interphase cortical microtubules. Modulates both rotational polarity and anisotropic cell expansion during organ growth. Promotes clockwise root and etiolated hypocotyls coiling, clockwise leaf curling, but left-handed petiole twisting. This chain is Protein WVD2-like 1 (WDL1), found in Arabidopsis thaliana (Mouse-ear cress).